The following is a 219-amino-acid chain: Urease subunit gamma/beta (219 aa).

Positions 1-101 (MFLTPREQEK…LVTVRNPIKS (101 aa)) are urease gamma. The urease beta stretch occupies residues 102 to 219 (SKKTLNTYII…IKRAKERGFA (118 aa)).

The protein in the N-terminal section; belongs to the urease gamma subunit family. In the C-terminal section; belongs to the urease beta subunit family. In terms of assembly, heterohexamer of 3 UreC (alpha) and 3 UreAB (gamma/beta) subunits.

Its subcellular location is the cytoplasm. The catalysed reaction is urea + 2 H2O + H(+) = hydrogencarbonate + 2 NH4(+). It participates in nitrogen metabolism; urea degradation; CO(2) and NH(3) from urea (urease route): step 1/1. The chain is Urease subunit gamma/beta from Sulfurisphaera tokodaii (strain DSM 16993 / JCM 10545 / NBRC 100140 / 7) (Sulfolobus tokodaii).